Reading from the N-terminus, the 136-residue chain is Large ribosomal subunit protein uL16 (136 aa).

This sequence belongs to the universal ribosomal protein uL16 family. As to quaternary structure, part of the 50S ribosomal subunit.

Functionally, binds 23S rRNA and is also seen to make contacts with the A and possibly P site tRNAs. This is Large ribosomal subunit protein uL16 from Shewanella denitrificans (strain OS217 / ATCC BAA-1090 / DSM 15013).